Reading from the N-terminus, the 246-residue chain is Pyridoxine 5'-phosphate synthase (246 aa).

Asn12 contributes to the 3-amino-2-oxopropyl phosphate binding site. Position 14–15 (14–15 (DH)) interacts with 1-deoxy-D-xylulose 5-phosphate. Arg23 lines the 3-amino-2-oxopropyl phosphate pocket. The Proton acceptor role is filled by His48. Arg50 and His55 together coordinate 1-deoxy-D-xylulose 5-phosphate. The Proton acceptor role is filled by Glu75. Thr105 lines the 1-deoxy-D-xylulose 5-phosphate pocket. His196 (proton donor) is an active-site residue. 3-amino-2-oxopropyl phosphate-binding positions include Gly197 and 218 to 219 (GH).

Belongs to the PNP synthase family. As to quaternary structure, homooctamer; tetramer of dimers.

It localises to the cytoplasm. The catalysed reaction is 3-amino-2-oxopropyl phosphate + 1-deoxy-D-xylulose 5-phosphate = pyridoxine 5'-phosphate + phosphate + 2 H2O + H(+). The protein operates within cofactor biosynthesis; pyridoxine 5'-phosphate biosynthesis; pyridoxine 5'-phosphate from D-erythrose 4-phosphate: step 5/5. Functionally, catalyzes the complicated ring closure reaction between the two acyclic compounds 1-deoxy-D-xylulose-5-phosphate (DXP) and 3-amino-2-oxopropyl phosphate (1-amino-acetone-3-phosphate or AAP) to form pyridoxine 5'-phosphate (PNP) and inorganic phosphate. This is Pyridoxine 5'-phosphate synthase from Nitrosococcus oceani (strain ATCC 19707 / BCRC 17464 / JCM 30415 / NCIMB 11848 / C-107).